A 309-amino-acid polypeptide reads, in one-letter code: Chitin synthase export chaperone (309 aa).

7 helical membrane passes run 51–71 (FQIG…IIIF), 86–106 (LFFF…DCGV), 114–134 (YAYF…CILY), 156–176 (VICF…FKSW), 194–214 (LINA…VVFA), 218–238 (YWPL…QVLT), and 251–271 (HYID…MMIY).

The protein belongs to the CHS7 family. In terms of assembly, interacts with CHS3.

It localises to the endoplasmic reticulum membrane. Functionally, chaperone required for the export of the chitin synthase CHS3 from the endoplasmic reticulum. The protein is Chitin synthase export chaperone (CHS7) of Debaryomyces hansenii (strain ATCC 36239 / CBS 767 / BCRC 21394 / JCM 1990 / NBRC 0083 / IGC 2968) (Yeast).